A 491-amino-acid chain; its full sequence is NADH-quinone oxidoreductase subunit N (491 aa).

A run of 14 helical transmembrane segments spans residues 6–26 (TLAP…INWI), 37–57 (VAYP…GMNA), 69–89 (LVVI…GLFV), 103–123 (MFAG…IVMI), 128–148 (FLTL…LVAL), 163–183 (FVLG…MYGA), 206–226 (LAFG…AAPF), 238–258 (PTAV…ALFI), 273–293 (QMML…TAIV), 301–321 (LAYS…SGVV), 335–355 (AMFY…IILL), 379–399 (FAFL…TVGF), 413–433 (GMTW…FYYL), and 458–478 (SMLS…AALM).

This sequence belongs to the complex I subunit 2 family. In terms of assembly, NDH-1 is composed of 14 different subunits. Subunits NuoA, H, J, K, L, M, N constitute the membrane sector of the complex.

The protein resides in the cell inner membrane. It catalyses the reaction a quinone + NADH + 5 H(+)(in) = a quinol + NAD(+) + 4 H(+)(out). Functionally, NDH-1 shuttles electrons from NADH, via FMN and iron-sulfur (Fe-S) centers, to quinones in the respiratory chain. The immediate electron acceptor for the enzyme in this species is believed to be ubiquinone. Couples the redox reaction to proton translocation (for every two electrons transferred, four hydrogen ions are translocated across the cytoplasmic membrane), and thus conserves the redox energy in a proton gradient. The polypeptide is NADH-quinone oxidoreductase subunit N (Cupriavidus taiwanensis (strain DSM 17343 / BCRC 17206 / CCUG 44338 / CIP 107171 / LMG 19424 / R1) (Ralstonia taiwanensis (strain LMG 19424))).